The chain runs to 160 residues: Ribosomal RNA large subunit methyltransferase H (160 aa).

S-adenosyl-L-methionine is bound by residues Leu-77, Gly-109, and 128–133 (FSRMTF).

Belongs to the RNA methyltransferase RlmH family. As to quaternary structure, homodimer.

The protein resides in the cytoplasm. It carries out the reaction pseudouridine(1915) in 23S rRNA + S-adenosyl-L-methionine = N(3)-methylpseudouridine(1915) in 23S rRNA + S-adenosyl-L-homocysteine + H(+). Specifically methylates the pseudouridine at position 1915 (m3Psi1915) in 23S rRNA. The sequence is that of Ribosomal RNA large subunit methyltransferase H from Pelotomaculum thermopropionicum (strain DSM 13744 / JCM 10971 / SI).